Consider the following 140-residue polypeptide: uncharacterized protein (140 aa).

The stretch at L27–R65 forms a coiled coil.

This is an uncharacterized protein from Pasteurella multocida (strain Pm70).